The following is a 194-amino-acid chain: NADH-quinone oxidoreductase subunit B (194 aa).

Residues Cys-73, Cys-74, Cys-138, and Cys-168 each contribute to the [4Fe-4S] cluster site.

The protein belongs to the complex I 20 kDa subunit family. NDH-1 is composed of 14 different subunits. Subunits NuoB, C, D, E, F, and G constitute the peripheral sector of the complex. Requires [4Fe-4S] cluster as cofactor.

Its subcellular location is the cell inner membrane. It catalyses the reaction a quinone + NADH + 5 H(+)(in) = a quinol + NAD(+) + 4 H(+)(out). NDH-1 shuttles electrons from NADH, via FMN and iron-sulfur (Fe-S) centers, to quinones in the respiratory chain. The immediate electron acceptor for the enzyme in this species is believed to be ubiquinone. Couples the redox reaction to proton translocation (for every two electrons transferred, four hydrogen ions are translocated across the cytoplasmic membrane), and thus conserves the redox energy in a proton gradient. This is NADH-quinone oxidoreductase subunit B from Bradyrhizobium sp. (strain BTAi1 / ATCC BAA-1182).